Reading from the N-terminus, the 448-residue chain is Potassium/proton antiporter CemA (448 aa).

A run of 4 helical transmembrane segments spans residues 224–244 (ALAS…ISML), 325–345 (IILH…LFII), 373–393 (ILLL…EIVI), and 408–428 (IISC…KYWI).

This sequence belongs to the CemA family.

It is found in the plastid. The protein resides in the chloroplast inner membrane. The enzyme catalyses K(+)(in) + H(+)(out) = K(+)(out) + H(+)(in). Functionally, contributes to K(+)/H(+) antiport activity by supporting proton efflux to control proton extrusion and homeostasis in chloroplasts in a light-dependent manner to modulate photosynthesis. Prevents excessive induction of non-photochemical quenching (NPQ) under continuous-light conditions. Indirectly promotes efficient inorganic carbon uptake into chloroplasts. The chain is Potassium/proton antiporter CemA from Angiopteris evecta (Mule's foot fern).